The sequence spans 538 residues: Lipid scramblase CLPTM1L (538 aa).

Topologically, residues 1–10 are cytoplasmic; sequence MWSGRSSFTS. A helical membrane pass occupies residues 11 to 31; it reads LVVGVFVVYVVHTCWVMYGIV. The Extracellular segment spans residues 32–284; that stretch reads YTRPCSGDAN…VKGIFVDTNL (253 aa). 2 N-linked (GlcNAc...) asparagine glycosylation sites follow: N91 and N101. Residues 285–305 traverse the membrane as a helical segment; it reads YFLALTFFVAAFHLLFDFLAF. The Cytoplasmic portion of the chain corresponds to 306–324; it reads KNDISFWKKKKSMIGMSTK. A helical transmembrane segment spans residues 325–342; it reads AVLWRCFSTVVIFLFLLD. The Extracellular segment spans residues 343 to 346; sequence EQTS. The chain crosses the membrane as a helical span at residues 347 to 364; that stretch reads LLVLVPAGVGAAIELWKV. Topologically, residues 365–402 are cytoplasmic; the sequence is KKALKMTILWRGLMPEFELGTYSESERKTEEYDTQAMK. Residues 403-423 form a helical membrane-spanning segment; the sequence is YLSYLLYPLCVGGAVYSLLNI. The Extracellular portion of the chain corresponds to 424 to 428; that stretch reads KYKSW. A helical transmembrane segment spans residues 429–449; sequence YSWLINSFVNGVYAFGFLFML. Residues 450-538 lie on the Cytoplasmic side of the membrane; sequence PQLFVNYKLK…EKAARAPHTD (89 aa).

The protein belongs to the CLPTM1 family.

The protein localises to the endoplasmic reticulum membrane. It catalyses the reaction a 6-(alpha-D-glucosaminyl)-1-(1,2-diacyl-sn-glycero-3-phospho)-1D-myo-inositol(in) = a 6-(alpha-D-glucosaminyl)-1-(1,2-diacyl-sn-glycero-3-phospho)-1D-myo-inositol(out). The enzyme catalyses 6-(alpha-D-glucosaminyl)-(1-octadecanoyl,2-(9Z)-octadecenoyl-sn-glycero-3-phospho)-1D-myo-inositol(in) = 6-(alpha-D-glucosaminyl)-(1-octadecanoyl,2-(9Z)-octadecenoyl-sn-glycero-3-phospho)-1D-myo-inositol(out). The catalysed reaction is a 1,2-diacyl-sn-glycero-3-phospho-(1D-myo-inositol)(in) = a 1,2-diacyl-sn-glycero-3-phospho-(1D-myo-inositol)(out). It carries out the reaction a 1,2-diacyl-sn-glycero-3-phosphocholine(in) = a 1,2-diacyl-sn-glycero-3-phosphocholine(out). It catalyses the reaction a 1,2-diacyl-sn-glycero-3-phosphoethanolamine(in) = a 1,2-diacyl-sn-glycero-3-phosphoethanolamine(out). Its function is as follows. Scramblase that mediates the translocation of glucosaminylphosphatidylinositol (alpha-D-GlcN-(1-6)-(1,2-diacyl-sn-glycero-3-phospho)-1D-myo-inositol, GlcN-PI) across the endoplasmic reticulum (ER) membrane, from the cytosolic leaflet to the luminal leaflet of the ER membrane, where it participates in the biosynthesis of glycosylphosphatidylinositol (GPI). GPI is a lipid glycoconjugate involved in post-translational modification of proteins. Can also translocate 1,2-diacyl-sn-glycero-3-phospho-(1D-myo-inositol) (phosphatidylinositol or PI), as well as several other phospholipids (1,2-diacyl-sn-glycero-3-phosphocholine, 1,2-diacyl-sn-glycero-3-phosphoethanolamine), and N-acetylglucosaminylphosphatidylinositol (GlcNAc-PI) in vitro. This Pongo abelii (Sumatran orangutan) protein is Lipid scramblase CLPTM1L (CLPTM1L).